The sequence spans 142 residues: Large ribosomal subunit protein uL13 (142 aa).

It belongs to the universal ribosomal protein uL13 family. Part of the 50S ribosomal subunit.

Its function is as follows. This protein is one of the early assembly proteins of the 50S ribosomal subunit, although it is not seen to bind rRNA by itself. It is important during the early stages of 50S assembly. The polypeptide is Large ribosomal subunit protein uL13 (Dechloromonas aromatica (strain RCB)).